The following is a 99-amino-acid chain: Aspartyl/glutamyl-tRNA(Asn/Gln) amidotransferase subunit C (99 aa).

This sequence belongs to the GatC family. In terms of assembly, heterotrimer of A, B and C subunits.

The enzyme catalyses L-glutamyl-tRNA(Gln) + L-glutamine + ATP + H2O = L-glutaminyl-tRNA(Gln) + L-glutamate + ADP + phosphate + H(+). It carries out the reaction L-aspartyl-tRNA(Asn) + L-glutamine + ATP + H2O = L-asparaginyl-tRNA(Asn) + L-glutamate + ADP + phosphate + 2 H(+). Allows the formation of correctly charged Asn-tRNA(Asn) or Gln-tRNA(Gln) through the transamidation of misacylated Asp-tRNA(Asn) or Glu-tRNA(Gln) in organisms which lack either or both of asparaginyl-tRNA or glutaminyl-tRNA synthetases. The reaction takes place in the presence of glutamine and ATP through an activated phospho-Asp-tRNA(Asn) or phospho-Glu-tRNA(Gln). In Paraburkholderia phymatum (strain DSM 17167 / CIP 108236 / LMG 21445 / STM815) (Burkholderia phymatum), this protein is Aspartyl/glutamyl-tRNA(Asn/Gln) amidotransferase subunit C.